Here is a 254-residue protein sequence, read N- to C-terminus: Urease accessory protein UreF (254 aa).

Over residues 1–11 the composition is skewed to basic and acidic residues; sequence MDKGKSVKSTE. The interval 1–25 is disordered; sequence MDKGKSVKSTEKSVGIPPKTPKTDN.

It belongs to the UreF family. In terms of assembly, ureH, UreF and UreG form a complex that acts as a GTP-hydrolysis-dependent molecular chaperone, activating the urease apoprotein by helping to assemble the nickel containing metallocenter of UreC. The UreE protein probably delivers the nickel.

Its subcellular location is the cytoplasm. Required for maturation of urease via the functional incorporation of the urease nickel metallocenter. This is Urease accessory protein UreF from Helicobacter pylori (strain P12).